The sequence spans 246 residues: Cell division protein ZapD (246 aa).

It belongs to the ZapD family. Interacts with FtsZ.

The protein localises to the cytoplasm. Cell division factor that enhances FtsZ-ring assembly. Directly interacts with FtsZ and promotes bundling of FtsZ protofilaments, with a reduction in FtsZ GTPase activity. This chain is Cell division protein ZapD, found in Vibrio cholerae serotype O1 (strain ATCC 39541 / Classical Ogawa 395 / O395).